The chain runs to 252 residues: Ribosomal RNA small subunit methyltransferase J (252 aa).

S-adenosyl-L-methionine contacts are provided by residues 126-127 (ER) and aspartate 176.

This sequence belongs to the methyltransferase superfamily. RsmJ family.

It is found in the cytoplasm. The catalysed reaction is guanosine(1516) in 16S rRNA + S-adenosyl-L-methionine = N(2)-methylguanosine(1516) in 16S rRNA + S-adenosyl-L-homocysteine + H(+). In terms of biological role, specifically methylates the guanosine in position 1516 of 16S rRNA. This is Ribosomal RNA small subunit methyltransferase J from Bdellovibrio bacteriovorus (strain ATCC 15356 / DSM 50701 / NCIMB 9529 / HD100).